We begin with the raw amino-acid sequence, 215 residues long: Probable transaldolase (215 aa).

Catalysis depends on Lys-83, which acts as the Schiff-base intermediate with substrate.

This sequence belongs to the transaldolase family. Type 3B subfamily.

It localises to the cytoplasm. The enzyme catalyses D-sedoheptulose 7-phosphate + D-glyceraldehyde 3-phosphate = D-erythrose 4-phosphate + beta-D-fructose 6-phosphate. It participates in carbohydrate degradation; pentose phosphate pathway; D-glyceraldehyde 3-phosphate and beta-D-fructose 6-phosphate from D-ribose 5-phosphate and D-xylulose 5-phosphate (non-oxidative stage): step 2/3. Transaldolase is important for the balance of metabolites in the pentose-phosphate pathway. In Methanococcus maripaludis (strain C7 / ATCC BAA-1331), this protein is Probable transaldolase.